A 298-amino-acid polypeptide reads, in one-letter code: Ribosomal RNA small subunit methyltransferase A (298 aa).

Residues Asn35, Leu37, Gly62, Glu83, Asp108, and Asn133 each coordinate S-adenosyl-L-methionine.

The protein belongs to the class I-like SAM-binding methyltransferase superfamily. rRNA adenine N(6)-methyltransferase family. RsmA subfamily.

It localises to the cytoplasm. The catalysed reaction is adenosine(1518)/adenosine(1519) in 16S rRNA + 4 S-adenosyl-L-methionine = N(6)-dimethyladenosine(1518)/N(6)-dimethyladenosine(1519) in 16S rRNA + 4 S-adenosyl-L-homocysteine + 4 H(+). Its function is as follows. Specifically dimethylates two adjacent adenosines (A1518 and A1519) in the loop of a conserved hairpin near the 3'-end of 16S rRNA in the 30S particle. May play a critical role in biogenesis of 30S subunits. This Streptococcus pyogenes serotype M2 (strain MGAS10270) protein is Ribosomal RNA small subunit methyltransferase A.